We begin with the raw amino-acid sequence, 154 residues long: MGLSDQEWQQVLTIWGKVEADIAGHGHEVLMRLFHDHPETLDRFDKFKGLKTPDQMKGSEDLKKHGATVLTQLGKILKQKGNHESELKPLAQTHATKHKIPVKYLEFISEVIIKVIAEKHAADFGADSQAAMKKALELFRNDMASKYKEFGFQG.

In terms of domain architecture, Globin spans 2–148 (GLSDQEWQQV…FRNDMASKYK (147 aa)). His65 provides a ligand contact to nitrite. Residue His65 coordinates O2. His94 is a heme b binding site.

It belongs to the globin family. As to quaternary structure, monomeric.

The protein resides in the cytoplasm. It is found in the sarcoplasm. The enzyme catalyses Fe(III)-heme b-[protein] + nitric oxide + H2O = Fe(II)-heme b-[protein] + nitrite + 2 H(+). The catalysed reaction is H2O2 + AH2 = A + 2 H2O. In terms of biological role, monomeric heme protein which primary function is to store oxygen and facilitate its diffusion within muscle tissues. Reversibly binds oxygen through a pentacoordinated heme iron and enables its timely and efficient release as needed during periods of heightened demand. Depending on the oxidative conditions of tissues and cells, and in addition to its ability to bind oxygen, it also has a nitrite reductase activity whereby it regulates the production of bioactive nitric oxide. Under stress conditions, like hypoxia and anoxia, it also protects cells against reactive oxygen species thanks to its pseudoperoxidase activity. The chain is Myoglobin (MB) from Gallus gallus (Chicken).